Consider the following 1507-residue polypeptide: Lhr helicase/ probable uracil glycosylase (1507 aa).

A lhr-Core region spans residues 1-856 (MTTNGADPLG…ASLLFGYVGA (856 aa)). 4 residues coordinate ATP: phenylalanine 24, glutamine 31, lysine 54, and threonine 55. In terms of domain architecture, Helicase ATP-binding spans 35 to 226 (WSAISEGNNT…FLSGQAPTTI (192 aa)). SsDNA contacts are provided by arginine 122, arginine 131, threonine 145, serine 148, and methionine 152. Positions 170 and 171 each coordinate ATP. A DEAH box motif is present at residues 170–173 (DEVH). Serine 253, tryptophan 255, and arginine 279 together coordinate ssDNA. The Helicase C-terminal domain occupies 257-451 (DVEERIVDLV…VLAQHTVAVA (195 aa)). ATP-binding residues include isoleucine 377, arginine 394, and histidine 397. Residues lysine 410, glutamine 518, arginine 519, isoleucine 528, tryptophan 597, aspartate 600, and arginine 777 each coordinate ssDNA. A WH domain region spans residues 436-529 (PANPLDVLAQ…LAVTSGGAIP (94 aa)). A domain 4 region spans residues 530 to 856 (DRGMFTVYLA…ASLLFGYVGA (327 aa)). Residues 857–1507 (FMYEGDSPLA…SRTPRGLRLR (651 aa)) are CTD.

Belongs to the Lhr helicase family. In terms of assembly, monomer. Homooligomerizes, possibly a homotetramer. Ca(2+) is required as a cofactor.

The enzyme catalyses Couples ATP hydrolysis with the unwinding of duplex DNA by translocating in the 3'-5' direction.. It catalyses the reaction ATP + H2O = ADP + phosphate + H(+). It carries out the reaction Hydrolyzes single-stranded DNA or mismatched double-stranded DNA and polynucleotides, releasing free uracil.. A 3'-5' helicase involved in repair of at least 3 types of DNA cross-links, mitomycin C (MMC), cisplatin, and psoralen-UVA. Translocates 3'-to-5' on single-stranded (ss)DNA, unwinding any encountered duplex nucleic acid. A 3'-ssDNA loading strand of at least 15 nucleotides is required for helicase activity. An RNA:DNA hybrid with a 3'-ssDNA loading strand is an 8-fold better helicase substrate than 3'-tailed double-stranded (ds)DNA; substrates where the helicase loads on a 3'-ssRNA tail (DNA:RNA and RNA:RNA) are not unwound. Only (d)ATP is hydrolyzed by the protein, which has no ATPase activity in the absence of ssDNA or ssRNA. Arg-279 and Trp-597 are needed to couple ATP hydrolysis to mechanical work; a salt bridge between Arg-280 and Glu-550 closes a clamp around the ssDNA that is not large enough for dsDNA, while Ile-528 wedges between bases of the loading strand. Functionally, excises uracil residues from ssDNA. Uracil residues in DNA can arise as a result of misincorporation of dUMP residues by DNA polymerase or due to deamination of cytosine. This Mycolicibacterium smegmatis (strain ATCC 700084 / mc(2)155) (Mycobacterium smegmatis) protein is Lhr helicase/ probable uracil glycosylase.